The following is a 331-amino-acid chain: Protein REVEILLE 6 (331 aa).

Residues 67-121 (TITKSRESWTEPEHDKFLEALQLFDRDWKKIEAFIGSKTVIQIRSHAQKYFLKVQ) enclose the HTH myb-type domain. Residues 94–117 (WKKIEAFIGSKTVIQIRSHAQKYF) constitute a DNA-binding region (H-T-H motif). Disordered regions lie at residues 122–166 (KSGT…EPND), 203–237 (LPKA…GNVG), and 309–331 (SETA…EIST). Positions 150-165 (VQLQVPGSFKSTSEPN) are enriched in polar residues. Residues 211–220 (NNNCSSSSEN) show a composition bias toward low complexity. 2 stretches are compositionally biased toward basic and acidic residues: residues 226–235 (SNRDARDHGN) and 322–331 (LNKDPPEIST).

The protein resides in the nucleus. Its function is as follows. Probable transcription factor. RVE4, RVE6 and RVE8 are components of the circadian system acting synergistically to regulate flowering time, redundantly to regulate leaf growth, and antagonistically to regulate hypocotyl elongation; their action seems independent of ZTL and HY5. The protein is Protein REVEILLE 6 of Arabidopsis thaliana (Mouse-ear cress).